The following is a 147-amino-acid chain: Protein archease (147 aa).

3 residues coordinate Ca(2+): D17, D146, and I147.

It belongs to the archease family.

Its function is as follows. Activates the tRNA-splicing ligase complex by facilitating the enzymatic turnover of catalytic subunit RtcB. Acts by promoting the guanylylation of RtcB, a key intermediate step in tRNA ligation. Can also alter the NTP specificity of RtcB such that ATP, dGTP or ITP is used efficiently. This chain is Protein archease, found in Pyrobaculum calidifontis (strain DSM 21063 / JCM 11548 / VA1).